Reading from the N-terminus, the 135-residue chain is Probable histone H2A.2 (135 aa).

It belongs to the histone H2A family. The nucleosome is a histone octamer containing two molecules each of H2A, H2B, H3 and H4 assembled in one H3-H4 heterotetramer and two H2A-H2B heterodimers. The octamer wraps approximately 147 bp of DNA.

It localises to the nucleus. Its subcellular location is the chromosome. Functionally, core component of nucleosome. Nucleosomes wrap and compact DNA into chromatin, limiting DNA accessibility to the cellular machineries which require DNA as a template. Histones thereby play a central role in transcription regulation, DNA repair, DNA replication and chromosomal stability. DNA accessibility is regulated via a complex set of post-translational modifications of histones, also called histone code, and nucleosome remodeling. The protein is Probable histone H2A.2 of Oryza sativa subsp. indica (Rice).